The primary structure comprises 833 residues: RNA-binding protein 5-A (833 aa).

Residues 1–87 (MGSDKRVSRS…GYHSDGDYMD (87 aa)) form a disordered region. An RRM 1 domain is found at 102–182 (KTIMLRGLPI…KTIAMHYSNP (81 aa)). The RanBP2-type zinc-finger motif lies at 185–214 (KFEDWLCNKCGLYNFRRRLKCFRCGAAKAE). One can recognise an RRM 2 domain in the interval 241–325 (SAIILRNIGP…KTIGVDFAKS (85 aa)). The span at 396-428 (TGAAEQGTAPQAESSSPVPATTSAVVCQSPQMY) shows a compositional bias: polar residues. Disordered stretches follow at residues 396–458 (TGAA…EEAA) and 523–559 (AADGAGQSGTQPNGANPGTSKEGKEKKEKPKSKTAQQ). The span at 429–458 (QQPGSPTQSSTSTVAASATPASGTSAEEAA) shows a compositional bias: low complexity. Residues 667-692 (LACLLCRRQFPNKDALTRHQQLSDLH) form a C2H2-type zinc finger. The 47-residue stretch at 761 to 807 (NSNIGNKMLQAMGWKEGSGLGRKSQGITAPIQAQVRMRGAGLGAKGS) folds into the G-patch domain.

Belongs to the RBM5/RBM10 family. In terms of assembly, component of the spliceosome A complex (also known as the prespliceosome). Appears to dissociate from the spliceosome upon formation of the spliceosome B complex (also known as the precatalytic spliceosome), in which the heterotrimeric U4/U6.U5 snRNPs are bound.

It is found in the nucleus. In terms of biological role, component of the spliceosome A complex. Regulates alternative splicing of a number of mRNAs. May modulate splice site pairing after recruitment of the U1 and U2 snRNPs to the 5' and 3' splice sites of the intron. The chain is RNA-binding protein 5-A (rbm5-a) from Xenopus laevis (African clawed frog).